Reading from the N-terminus, the 313-residue chain is GMP synthase [glutamine-hydrolyzing] subunit B (313 aa).

In terms of domain architecture, GMPS ATP-PPase spans 6–190 (KVWEKFIEEK…LGLPEKIYNR (185 aa)). 33–39 (SGGVDSS) is a binding site for ATP.

As to quaternary structure, heterodimer composed of a glutamine amidotransferase subunit (A) and a GMP-binding subunit (B).

It catalyses the reaction XMP + L-glutamine + ATP + H2O = GMP + L-glutamate + AMP + diphosphate + 2 H(+). It functions in the pathway purine metabolism; GMP biosynthesis; GMP from XMP (L-Gln route): step 1/1. In terms of biological role, catalyzes the synthesis of GMP from XMP. The sequence is that of GMP synthase [glutamine-hydrolyzing] subunit B (guaAB) from Pyrococcus furiosus (strain ATCC 43587 / DSM 3638 / JCM 8422 / Vc1).